The primary structure comprises 595 residues: Aspartate--tRNA(Asp/Asn) ligase (595 aa).

An L-aspartate-binding site is contributed by E171. Residues 195-198 (QLFK) are aspartate. R217 lines the L-aspartate pocket. ATP is bound by residues 217–219 (RDE) and Q226. H454 is a binding site for L-aspartate. E488 contributes to the ATP binding site. An L-aspartate-binding site is contributed by R495. 540-543 (GLDR) is a binding site for ATP.

The protein belongs to the class-II aminoacyl-tRNA synthetase family. Type 1 subfamily. As to quaternary structure, homodimer.

The protein resides in the cytoplasm. The catalysed reaction is tRNA(Asx) + L-aspartate + ATP = L-aspartyl-tRNA(Asx) + AMP + diphosphate. Its function is as follows. Aspartyl-tRNA synthetase with relaxed tRNA specificity since it is able to aspartylate not only its cognate tRNA(Asp) but also tRNA(Asn). Reaction proceeds in two steps: L-aspartate is first activated by ATP to form Asp-AMP and then transferred to the acceptor end of tRNA(Asp/Asn). The chain is Aspartate--tRNA(Asp/Asn) ligase from Bordetella petrii (strain ATCC BAA-461 / DSM 12804 / CCUG 43448).